The primary structure comprises 192 residues: dTTP/UTP pyrophosphatase (192 aa).

Asp71 (proton acceptor) is an active-site residue.

It belongs to the Maf family. YhdE subfamily. Requires a divalent metal cation as cofactor.

Its subcellular location is the cytoplasm. It carries out the reaction dTTP + H2O = dTMP + diphosphate + H(+). The catalysed reaction is UTP + H2O = UMP + diphosphate + H(+). In terms of biological role, nucleoside triphosphate pyrophosphatase that hydrolyzes dTTP and UTP. May have a dual role in cell division arrest and in preventing the incorporation of modified nucleotides into cellular nucleic acids. The protein is dTTP/UTP pyrophosphatase of Clostridium tetani (strain Massachusetts / E88).